Consider the following 467-residue polypeptide: Hydroxyacid-oxoacid transhydrogenase, mitochondrial (467 aa).

Residue K445 is modified to N6-acetyllysine. S452 is modified (phosphoserine).

It belongs to the iron-containing alcohol dehydrogenase family. Hydroxyacid-oxoacid transhydrogenase subfamily. As to expression, only expressed in adult liver.

The protein localises to the mitochondrion. The catalysed reaction is (S)-3-hydroxybutanoate + 2-oxoglutarate = (R)-2-hydroxyglutarate + acetoacetate. It catalyses the reaction 4-hydroxybutanoate + 2-oxoglutarate = (R)-2-hydroxyglutarate + succinate semialdehyde. Catalyzes the cofactor-independent reversible oxidation of gamma-hydroxybutyrate (GHB) to succinic semialdehyde (SSA) coupled to reduction of 2-ketoglutarate (2-KG) to D-2-hydroxyglutarate (D-2-HG). D,L-3-hydroxyisobutyrate and L-3-hydroxybutyrate (L-3-OHB) are also substrates for HOT with 10-fold lower activities. The protein is Hydroxyacid-oxoacid transhydrogenase, mitochondrial (ADHFE1) of Homo sapiens (Human).